The chain runs to 245 residues: UPF0319 protein VV0984 (245 aa).

The first 20 residues, 1–20 (MRYIGKWMMLGALVSSSVFA), serve as a signal peptide directing secretion.

Belongs to the UPF0319 family.

The sequence is that of UPF0319 protein VV0984 from Vibrio vulnificus (strain YJ016).